A 916-amino-acid chain; its full sequence is MANYQTAHAQERRIQELDQTVESIFDVRKRMGKGAYGIVWKATDRRTKNTVALKKVFDAFRDETDAQRTYREVIFLRAFRCHPNIVRLVDIFKASNNLDFYLVFEFMESDLHNVIKRGNVLKDVHKRFVMYQLINAIKFIHSGNVIHRDLKPSNILIDSKCRLKVADFGLARTLSSRRIYDDLEQDGMLTDYVATRWYRAPEILVASRNYTKGIDMWGLGCILGEMIRQKPLFQGTSTVNQIEKIVTSLPNVTKLDIASIGPSFGSVLLSRNIQRDRRYSLDEMMKNCCDDGISLVKALLVLNPHNRLTAKEAIRHPYVSRFQYASAEMDLHMDVVPPLKDHVRYDVDQYRNSLYELIDRETSCSNRTVSNSTPSSNRDELPKPVRVTKQARTTSAKQPTTSPAERKKEPSSVEVTQSRKNIKLLGSAHKAQSKEINHMESAITQVSIASAPPAAAPPAPAATAPAVPRKSGDKSVPKCQHNNAAVQRELAAVAAAAAVARRKKSSWQSQAQSQGKFHTEAKAHVQTAIQTQKDNIKDSPPRMIQESQSLTEAKAPIPKNRYSNKMCQEKKYKKKHHSMSCITRDTFPSETEHRQQREERAYQRQMKRELQLKESYRRRIEAESEPLKETTEQESKTIKVIEQKVCEHTEKKADESLSKDQQKDSITFGTCVRERIHHLELEMEKCTEELVDFVELNADVLNYANVSTHLKKLQRSKESDEKDEDDRRALPEGIGGPGSQNYEIFRQEQEKERQRQVQEFLARDETNEYDNLDLDHAYRAKYYTAYKEIGKELNPAPDSGGRDSGSEHSPGRDNYTTYADYFLKYTTPQQNWNDLERANGLQREHDRIYGLFWLNDRRQEEKYRRKLAQNDQEELPVHHHKACRHRHHKPNHHAPYDHMRPTEDDIQEADSLPESN.

In terms of domain architecture, Protein kinase spans 25-319 (FDVRKRMGKG…AKEAIRHPYV (295 aa)). Residues 31–39 (MGKGAYGIV) and Lys-54 each bind ATP. Asp-149 acts as the Proton acceptor in catalysis. Composition is skewed to polar residues over residues 364–376 (CSNR…TPSS) and 390–403 (QART…TTSP). Disordered stretches follow at residues 364–419 (CSNR…TQSR), 452–477 (PPAA…KSVP), 588–608 (PSET…QMKR), 711–742 (KKLQ…SQNY), 792–813 (ELNP…PGRD), and 883–916 (CRHR…PESN). Basic and acidic residues-rich tracts occupy residues 590-608 (ETEH…QMKR), 715-730 (RSKE…RRAL), and 800-811 (GGRDSGSEHSPG). Residues 883–892 (CRHRHHKPNH) are compositionally biased toward basic residues. A compositionally biased stretch (basic and acidic residues) spans 894 to 903 (APYDHMRPTE).

It belongs to the protein kinase superfamily. Ser/Thr protein kinase family.

The enzyme catalyses L-seryl-[protein] + ATP = O-phospho-L-seryl-[protein] + ADP + H(+). It carries out the reaction L-threonyl-[protein] + ATP = O-phospho-L-threonyl-[protein] + ADP + H(+). Functionally, atypical MAPK protein that regulates protein secretion in a kinase activity-dependent manner. In response to starvation regulates protein secretion by mediating transitional endoplasmic reticulum site disassembly. Mediates inhibition of insulin-like peptide secretion upon disturbed ribosome biogenesis and acts as a downstream effector of TP53. This Drosophila melanogaster (Fruit fly) protein is Extracellular signal-regulated kinase 7.